A 391-amino-acid chain; its full sequence is Putative neutrophil cytosol factor 1B (391 aa).

Residues 1-126 (MGDTFIRHIA…DFFKVRPDDL (126 aa)) enclose the PX domain. SH3 domains follow at residues 157–216 (IILQ…PLDS) and 227–286 (YAGE…KSGQ). The segment at 286–391 (QDVSQAQRQI…STKRKLASAV (106 aa)) is disordered. Phosphoserine is present on residues Ser304 and Ser305. Positions 310 to 319 (HSIHQRSRKR) are enriched in basic residues. A phosphoserine mark is found at Ser321, Ser329, Ser346, and Ser349.

The protein localises to the cytoplasm. May be required for activation of the latent NADPH oxidase (necessary for superoxide production). The protein is Putative neutrophil cytosol factor 1B (NCF1B) of Homo sapiens (Human).